The primary structure comprises 353 residues: Holliday junction branch migration complex subunit RuvB (353 aa).

The segment at 1–183 (MNEPRIVAPQ…FGATYRLDFY (183 aa)) is large ATPase domain (RuvB-L). Residues leucine 22, arginine 23, glycine 64, lysine 67, threonine 68, threonine 69, 130–132 (EDF), arginine 173, tyrosine 183, and arginine 220 contribute to the ATP site. A Mg(2+)-binding site is contributed by threonine 68. Residues 184–254 (DTAALRAIVE…LARLALDQLA (71 aa)) form a small ATPAse domain (RuvB-S) region. The interval 257–353 (ELGLDEVDRL…HAASERSSDA (97 aa)) is head domain (RuvB-H). The DNA site is built by arginine 312 and arginine 317.

It belongs to the RuvB family. In terms of assembly, homohexamer. Forms an RuvA(8)-RuvB(12)-Holliday junction (HJ) complex. HJ DNA is sandwiched between 2 RuvA tetramers; dsDNA enters through RuvA and exits via RuvB. An RuvB hexamer assembles on each DNA strand where it exits the tetramer. Each RuvB hexamer is contacted by two RuvA subunits (via domain III) on 2 adjacent RuvB subunits; this complex drives branch migration. In the full resolvosome a probable DNA-RuvA(4)-RuvB(12)-RuvC(2) complex forms which resolves the HJ.

Its subcellular location is the cytoplasm. It carries out the reaction ATP + H2O = ADP + phosphate + H(+). The RuvA-RuvB-RuvC complex processes Holliday junction (HJ) DNA during genetic recombination and DNA repair, while the RuvA-RuvB complex plays an important role in the rescue of blocked DNA replication forks via replication fork reversal (RFR). RuvA specifically binds to HJ cruciform DNA, conferring on it an open structure. The RuvB hexamer acts as an ATP-dependent pump, pulling dsDNA into and through the RuvAB complex. RuvB forms 2 homohexamers on either side of HJ DNA bound by 1 or 2 RuvA tetramers; 4 subunits per hexamer contact DNA at a time. Coordinated motions by a converter formed by DNA-disengaged RuvB subunits stimulates ATP hydrolysis and nucleotide exchange. Immobilization of the converter enables RuvB to convert the ATP-contained energy into a lever motion, pulling 2 nucleotides of DNA out of the RuvA tetramer per ATP hydrolyzed, thus driving DNA branch migration. The RuvB motors rotate together with the DNA substrate, which together with the progressing nucleotide cycle form the mechanistic basis for DNA recombination by continuous HJ branch migration. Branch migration allows RuvC to scan DNA until it finds its consensus sequence, where it cleaves and resolves cruciform DNA. The protein is Holliday junction branch migration complex subunit RuvB of Thermomicrobium roseum (strain ATCC 27502 / DSM 5159 / P-2).